The chain runs to 213 residues: Retinitis pigmentosa 9 protein homolog (213 aa).

Residues 1–61 form a disordered region; the sequence is MSSGAGSRRP…IKEDETKPED (61 aa). Residues 1-147 are PIM1-binding; the sequence is MSSGAGSRRP…RENKRHEKDV (147 aa). Basic and acidic residues-rich tracts occupy residues 9-21 and 52-61; these read RPRE…LQRR and IKEDETKPED. A CCHC-type zinc finger spans residues 96-114; that stretch reads QCWRCKRYGHRTGDKECPF. Residue lysine 121 forms a Glycyl lysine isopeptide (Lys-Gly) (interchain with G-Cter in SUMO2) linkage. Residues 154 to 213 form a disordered region; it reads QLLEDSTSDDDGSSSSSSGDREKRKKRKKKEKHKKRKKEKKKKKKRKHKASKSSESSDSE. Residues 176–204 are compositionally biased toward basic residues; the sequence is KRKKRKKKEKHKKRKKEKKKKKKRKHKAS. Residues serine 204 and serine 206 each carry the phosphoserine; by PIM1; in vitro modification.

As to quaternary structure, binds to PIM1. Binds to ZNHIT4. Highly expressed in the testis, moderately in the kidney, liver and spleen, and weakly in the skeletal muscle and heart.

The protein localises to the nucleus. In terms of biological role, is thought to be a target protein for the PIM1 kinase. May play some roles in B-cell proliferation in association with PIM1. This Mus musculus (Mouse) protein is Retinitis pigmentosa 9 protein homolog (rp9).